We begin with the raw amino-acid sequence, 509 residues long: Src substrate cortactin (509 aa).

The disordered stretch occupies residues 1 to 28 (MWKASAGHAVSITQDDGGADDWETDPDF). The segment covering 17 to 28 (GGADDWETDPDF) has biased composition (acidic residues). 5 Cortactin repeats span residues 80-116 (ASHGYGGKFGVEQDRMDKSAVGHEYQSKLSKHCSQVD), 117-153 (SVRGFGGKFGVQMDRVDQSAVGFEYQGKTEKHASQKD), 154-190 (YSSGFGGKYGVQADRVDKSAVGFDYQGKTEKHESQKD), 191-227 (YSKGFGGKYGIDKDKVDKSAVGFEYQGKTEKHESQKD), and 228-264 (YVKGFGGKFGVQTDRQDKCALGWDHQEKLQLHESQKD). 2 positions are modified to N6-acetyllysine: Lys87 and Lys107. Ser113 carries the phosphoserine modification. At Arg119 the chain carries Omega-N-methylarginine. Lys124 is subject to N6-acetyllysine. Lys144 carries the N6-acetyllysine; alternate modification. Lys144 is covalently cross-linked (Glycyl lysine isopeptide (Lys-Gly) (interchain with G-Cter in SUMO1); alternate). Lys144 is covalently cross-linked (Glycyl lysine isopeptide (Lys-Gly) (interchain with G-Cter in SUMO2); alternate). The residue at position 150 (Ser150) is a Phosphoserine. N6-acetyllysine is present on residues Lys152, Lys161, and Lys171. Residue Lys181 is modified to N6-acetyllysine; alternate. Lys181 is covalently cross-linked (Glycyl lysine isopeptide (Lys-Gly) (interchain with G-Cter in SUMO1); alternate). Lys181 is covalently cross-linked (Glycyl lysine isopeptide (Lys-Gly) (interchain with G-Cter in SUMO2); alternate). An N6-acetyllysine mark is found at Lys193 and Lys198. Residue Lys218 forms a Glycyl lysine isopeptide (Lys-Gly) (interchain with G-Cter in SUMO1) linkage. Lys235 bears the N6-acetyllysine mark. Ser261 is subject to Phosphoserine. The stretch at 265–287 (YAKGFGGKYGVQKDRMDKNASTF) is one Cortactin 6; truncated repeat. N6-acetyllysine is present on residues Lys267, Lys272, Lys277, and Lys309. A coiled-coil region spans residues 311 to 364 (SNIRANFENLAKEREQEDRRKAEAERAQRMAQERQEQEEARRKLEEQARAKKQT). A disordered region spans residues 318 to 409 (ENLAKEREQE…EPEPEYSTEA (92 aa)). Residues 320–359 (LAKEREQEDRRKAEAERAQRMAQERQEQEEARRKLEEQAR) are compositionally biased toward basic and acidic residues. Residue Thr364 is modified to Phosphothreonine. Residues Ser368, Ser370, Ser380, and Ser381 each carry the phosphoserine modification. Phosphotyrosine; by FAK1 is present on Tyr384. Low complexity predominate over residues 393-406 (EPSYGSSEPEPEYS). At Tyr405 the chain carries Phosphotyrosine. A Phosphoserine modification is found at Ser406. A phosphotyrosine; by FAK1 mark is found at Tyr429 and Tyr445. A phosphotyrosine; by SRC mark is found at Tyr445 and Tyr448. The SH3 domain occupies 451–509 (DLGITAIALYDYQAAGDDEISFDPDDVITNIEMIDDGWWRGVCKGRYGLFPANYVELRQ).

Part of a complex composed of NEDD9, AURKA and CTTN; within the complex NEDD9 acts as a scaffold protein and is required for complex formation. Interacts (via N-terminus) with NEDD9. Identified in a complex containing FGFR4, NCAM1, CDH2, PLCG1, FRS2, SRC, SHC1, GAP43 and CTTN. Forms a complex with ABL1 and MYLK. Interacts with SHANK2 and SHANK3 (via its SH3 domain). Interacts with PLXDC2 and SRCIN1. Interacts with SAMSN1 (via SH3 domain). Interacts (via SH3 domain) with ASAP1 (via Pro-rich region). Interacts with FER. Interacts with FGD1. Interacts with ABL2. Interacts with CTTNBP2NL; this interaction may target CTTN to stress fibers. Interacts with CTTNBP2; this interaction may target CTTN at the cell cortex or dendritic spines. Interacts (via SH3 domain) with DNM2. Interacts with ACTN1. Interacts with KCNA2 (via non-phosphorylated C-terminus). Interacts with PTK2/FAK1. Interacts with KCNH1. Interacts (via SH3 domain) with DIP2A (via N-terminus); the interaction enhances CTTN acetylation and is required for proper synaptic transmission. Interacts with XIRP1 (via N-terminus); the interaction promotes CTTN localization to intercalated disks in cardiomyocytes. Post-translationally, acetylated. In terms of processing, phosphorylated by FER. Phosphorylated in response to FGR activation. Phosphorylation by SRC promotes MYLK binding. Tyrosine phosphorylation in transformed cells may contribute to cellular growth regulation and transformation. Phosphorylated by PKN2 at both serine and threonine residues in a GTP-bound Rac1-dependent manner in hyaluronan-induced astrocytes and hence down-regulated CTTN ability to associate with filamentous actin. Phosphorylated on tyrosine residues in response to CHRM1 activation. Phosphorylated by PTK2/FAK1 in response to cell adhesion. Detected in liver (at protein level).

The protein localises to the cytoplasm. The protein resides in the cytoskeleton. It localises to the cell projection. Its subcellular location is the lamellipodium. It is found in the ruffle. The protein localises to the dendrite. The protein resides in the cell membrane. It localises to the podosome. Its subcellular location is the cell junction. It is found in the focal adhesion. The protein localises to the membrane. The protein resides in the clathrin-coated pit. It localises to the dendritic spine. Its subcellular location is the cell cortex. It is found in the endoplasmic reticulum. Functionally, contributes to the organization of the actin cytoskeleton and cell shape. Plays a role in the formation of lamellipodia and in cell migration. Plays a role in the regulation of neuron morphology, axon growth and formation of neuronal growth cones. Through its interaction with CTTNBP2, involved in the regulation of neuronal spine density. Plays a role in focal adhesion assembly and turnover. In complex with ABL1 and MYLK regulates cortical actin-based cytoskeletal rearrangement critical to sphingosine 1-phosphate (S1P)-mediated endothelial cell (EC) barrier enhancement. Plays a role in intracellular protein transport and endocytosis, and in modulating the levels of potassium channels present at the cell membrane. Plays a role in receptor-mediated endocytosis via clathrin-coated pits. Required for stabilization of KCNH1 channels at the cell membrane. This chain is Src substrate cortactin, found in Rattus norvegicus (Rat).